The primary structure comprises 451 residues: Phosphoglucosamine mutase (451 aa).

Residue Ser-101 is the Phosphoserine intermediate of the active site. The Mg(2+) site is built by Ser-101, Asp-242, Asp-244, and Asp-246. Phosphoserine is present on Ser-101.

This sequence belongs to the phosphohexose mutase family. Mg(2+) serves as cofactor. Activated by phosphorylation.

The enzyme catalyses alpha-D-glucosamine 1-phosphate = D-glucosamine 6-phosphate. Catalyzes the conversion of glucosamine-6-phosphate to glucosamine-1-phosphate. The chain is Phosphoglucosamine mutase from Beijerinckia indica subsp. indica (strain ATCC 9039 / DSM 1715 / NCIMB 8712).